Reading from the N-terminus, the 139-residue chain is Small ribosomal subunit protein uS12 (139 aa).

Position 102 is a 3-methylthioaspartic acid (Asp-102).

Belongs to the universal ribosomal protein uS12 family. In terms of assembly, part of the 30S ribosomal subunit. Contacts proteins S8 and S17. May interact with IF1 in the 30S initiation complex.

With S4 and S5 plays an important role in translational accuracy. In terms of biological role, interacts with and stabilizes bases of the 16S rRNA that are involved in tRNA selection in the A site and with the mRNA backbone. Located at the interface of the 30S and 50S subunits, it traverses the body of the 30S subunit contacting proteins on the other side and probably holding the rRNA structure together. The combined cluster of proteins S8, S12 and S17 appears to hold together the shoulder and platform of the 30S subunit. This is Small ribosomal subunit protein uS12 from Phytoplasma australiense.